A 155-amino-acid chain; its full sequence is Medium/long-chain acyl-CoA thioesterase YigI (155 aa).

This sequence belongs to the YigI thioesterase family.

It is found in the cytoplasm. It catalyses the reaction a fatty acyl-CoA + H2O = a fatty acid + CoA + H(+). It carries out the reaction a medium-chain fatty acyl-CoA + H2O = a medium-chain fatty acid + CoA + H(+). The enzyme catalyses a long-chain fatty acyl-CoA + H2O = a long-chain fatty acid + CoA + H(+). Displays thioesterase activity against medium- to long-chain acyl-CoA substrates. Is involved in the thioesterase-dependent beta-oxidation pathway of (9Z,11E)-octadecadienoate (conjugated linoleic acid or CLA), along with TesB and FadM. The polypeptide is Medium/long-chain acyl-CoA thioesterase YigI (yigI) (Shigella flexneri).